The following is a 280-amino-acid chain: Eukaryotic translation initiation factor 3 subunit F-1 (280 aa).

Residues 8-138 (VRVHPVVLFQ…LRAYVCIQLG (131 aa)) form the MPN domain.

This sequence belongs to the eIF-3 subunit F family. As to quaternary structure, component of the eukaryotic translation initiation factor 3 (eIF-3) complex. The eIF-3 complex interacts with pix.

The protein localises to the cytoplasm. In terms of biological role, component of the eukaryotic translation initiation factor 3 (eIF-3) complex, which is involved in protein synthesis of a specialized repertoire of mRNAs and, together with other initiation factors, stimulates binding of mRNA and methionyl-tRNAi to the 40S ribosome. The eIF-3 complex specifically targets and initiates translation of a subset of mRNAs involved in cell proliferation. This is Eukaryotic translation initiation factor 3 subunit F-1 from Drosophila virilis (Fruit fly).